The following is a 395-amino-acid chain: Zinc-regulated GTPase metalloprotein activator 1F (395 aa).

Residues 1–22 (MLPAVGSVDEEEDPAEEDCPEL) are disordered. The span at 8–20 (VDEEEDPAEEDCP) shows a compositional bias: acidic residues. The short motif at 17-24 (EDCPELVP) is the psi-PxLVp motif element. 49–56 (GYLGAGKT) contacts GTP. The Zn(2+) site is built by C107, C109, and C110. The CXCC motif signature appears at 107–110 (CLCC). Residues 110-114 (CSVKD) and 203-206 (NKTD) each bind GTP. The 104-residue stretch at 274-377 (IVTITFDVPG…ILKQLFIATV (104 aa)) folds into the CobW C-terminal domain.

Belongs to the SIMIBI class G3E GTPase family. ZNG1 subfamily.

It is found in the nucleus. The enzyme catalyses GTP + H2O = GDP + phosphate + H(+). In terms of biological role, zinc chaperone that directly transfers zinc cofactor to target metalloproteins, thereby activating them. Catalyzes zinc insertion into the active site of methionine aminopeptidase METAP1, which function to cleave the initiator methionine from polypeptides during or after protein translation. Mechanistically, the N-terminal psi-PxLVp motif binds to the C6H2-type zinc finger of inactive form of METAP1. After formation of the docked complex, zinc is transferred from the CXCC motif in the GTPase domain of ZNG1F to the zinc binding site in the peptidase domain of METAP1 in a process requiring GTP hydrolysis. GTP/GDP exchange is required for release of active METAP1. The chain is Zinc-regulated GTPase metalloprotein activator 1F from Homo sapiens (Human).